We begin with the raw amino-acid sequence, 264 residues long: Catechol O-methyltransferase B (264 aa).

A signal peptide spans 1-29 (MLGVLLCWCLGASVLLYVLYSWLIPAAVQ). An N-linked (GlcNAc...) asparagine glycan is attached at asparagine 31. 4 residues coordinate S-adenosyl-L-methionine: valine 92, serine 122, glutamate 140, and aspartate 191. Aspartate 191 contacts Mg(2+). Position 194 (lysine 194) interacts with substrate. Mg(2+)-binding residues include aspartate 219 and asparagine 220. Asparagine 220 and glutamate 249 together coordinate substrate.

This sequence belongs to the class I-like SAM-binding methyltransferase superfamily. Cation-dependent O-methyltransferase family. Requires Mg(2+) as cofactor. As to expression, strongly expressed in eye, diencephalon, spinal cord, hindbrain, liver, kidney and telencephalon. Also detected at very low levels in muscle, spleen, anterior gut and heart. In eye, expressed strongly in retina. In brain, expressed in the central part of the telencephalon, the periventricular gray zone of the optic tectum, the periglomerular nucleus, the olfactory bulb, and the region adjacent to the diencephalic ventricle in the hypothalamus. Expressed in gill, with strongest expression in gill filaments nearest the gill arch, and in esophageal epithelium.

The protein localises to the secreted. The catalysed reaction is a catechol + S-adenosyl-L-methionine = a guaiacol + S-adenosyl-L-homocysteine + H(+). Catalyzes the O-methylation, and thereby the inactivation, of catecholamine neurotransmitters and catechol hormones. The sequence is that of Catechol O-methyltransferase B from Danio rerio (Zebrafish).